Here is a 736-residue protein sequence, read N- to C-terminus: MASSLYQQLISQNYYSIGNEILTDQQTTETVVDYVDAGNYTYAQLPPTKWGARGTFKSAFNVSNITGPHTNTIIEWSNLLNSNGWVIYQKPANTTKLFKHGPETYNSNLAAFELWYGKAGTSVTSDYYSSLQNNEKTVTATSDSLILFWNEGSTVLANKKVNFSWDMGGMLIKPTRGNRVDICMANMNDFNSSIFNWEEWKHEFPRSDVNINVNMYTDYYLASEDPYTELKALQQPNITTFEMKMMKIIRNGSINLNEVVSKDSLWQEVRYARDITLECKIESEVVKGGGWGYDYTSVAFKTVNHTYTYTRAGEIVNAHVTISFNNMKERSYGGSLPTDFKIGRFDVIDTDTYMYIDYWDDSEIFKNMVYVRDLSANIGGFFYYAEMSYYFQIPVGAHPGLHSSGVRFVYERCLLSQQFTDQVALNSMRFIFRVTESNGWFMTSGNINTRRIASGTGFAYADGHTSQTVGNITFISLIPSNPNYQTPIASSSTVRMDLERKINDLRNDFNQLANSVALGDILSLATSPLTFANLLESVPAIASSVKDVAANVMKKFRNTKMFKKATKAKYSEFIIGDLLEDVTNVARNSNGMNFDDITSAVMVSTTNKLQLTDVDTLSEIVARSADNFIPNRSYRMIEDGIVYEATPKRTFSYDLTTLQQREFDIDKFMRLASKSPVISAIVDFATLKAMRETYGVGTDVIYKLVASDAPTILSFIDNNNPLIKSRIEELLRQCRL.

The stretch at 495–515 forms a coiled coil; sequence RMDLERKINDLRNDFNQLANS.

Belongs to the rotavirus VP4 family. In terms of assembly, homotrimer. VP4 adopts a dimeric appearance above the capsid surface, while forming a trimeric base anchored inside the capsid layer. Only hints of the third molecule are observed above the capsid surface. It probably performs a series of molecular rearrangements during viral entry. Prior to trypsin cleavage, it is flexible. The priming trypsin cleavage triggers its rearrangement into rigid spikes with approximate two-fold symmetry of their protruding parts. After an unknown second triggering event, cleaved VP4 may undergo another rearrangement, in which two VP5* subunits fold back on themselves and join a third subunit to form a tightly associated trimer, shaped like a folded umbrella. Interacts with VP6. Interacts with VP7. As to quaternary structure, homotrimer. The trimer is coiled-coil stabilized by its C-terminus, however, its N-terminus, known as antigen domain or 'body', seems to be flexible allowing it to self-associate either as a dimer or a trimer. Proteolytic cleavage by trypsin results in activation of VP4 functions and greatly increases infectivity. The penetration into the host cell is dependent on trypsin treatment of VP4. It produces two peptides, VP5* and VP8* that remain associated with the virion. Cleavage of VP4 by trypsin probably occurs in vivo in the lumen of the intestine prior to infection of enterocytes. Trypsin seems to be incorporated into the three-layered viral particles but remains inactive as long as the viral outer capsid is intact and would only be activated upon the solubilization of the latter.

The protein localises to the virion. The protein resides in the host rough endoplasmic reticulum. Its subcellular location is the host cell membrane. It localises to the host endoplasmic reticulum-Golgi intermediate compartment. Spike-forming protein that mediates virion attachment to the host epithelial cell receptors and plays a major role in cell penetration, determination of host range restriction and virulence. Rotavirus attachment and entry into the host cell probably involves multiple sequential contacts between the outer capsid proteins VP4 and VP7, and the cell receptors. It is subsequently lost, together with VP7, following virus entry into the host cell. Following entry into the host cell, low intracellular or intravesicular Ca(2+) concentration probably causes the calcium-stabilized VP7 trimers to dissociate from the virion. This step is probably necessary for the membrane-disrupting entry step and the release of VP4, which is locked onto the virion by VP7. In terms of biological role, forms the spike 'foot' and 'body' and acts as a membrane permeabilization protein that mediates release of viral particles from endosomal compartments into the cytoplasm. During entry, the part of VP5* that protrudes from the virus folds back on itself and reorganizes from a local dimer to a trimer. This reorganization may be linked to membrane penetration. Its function is as follows. Forms the head of the spikes and mediates the recognition of specific host cell surface glycans. It is the viral hemagglutinin and an important target of neutralizing antibodies. In Rotavirus C (strain RVC/Pig/United States/Cowden/1980) (RV-C), this protein is Outer capsid protein VP4.